The chain runs to 285 residues: Bifunctional protein FolD (285 aa).

NADP(+) is bound by residues 166-168 (GAS) and Ile232.

This sequence belongs to the tetrahydrofolate dehydrogenase/cyclohydrolase family. As to quaternary structure, homodimer.

It catalyses the reaction (6R)-5,10-methylene-5,6,7,8-tetrahydrofolate + NADP(+) = (6R)-5,10-methenyltetrahydrofolate + NADPH. It carries out the reaction (6R)-5,10-methenyltetrahydrofolate + H2O = (6R)-10-formyltetrahydrofolate + H(+). It participates in one-carbon metabolism; tetrahydrofolate interconversion. In terms of biological role, catalyzes the oxidation of 5,10-methylenetetrahydrofolate to 5,10-methenyltetrahydrofolate and then the hydrolysis of 5,10-methenyltetrahydrofolate to 10-formyltetrahydrofolate. In Aliivibrio fischeri (strain MJ11) (Vibrio fischeri), this protein is Bifunctional protein FolD.